The sequence spans 1171 residues: ATP-dependent helicase/deoxyribonuclease subunit B (1171 aa).

Residues 1–343 form the UvrD-like helicase ATP-binding domain; sequence MSLRFVIGRA…LVAEENYRYR (343 aa). 8–15 contacts ATP; that stretch reads GRAGSGKS. The 307-residue stretch at 281–587 folds into the UvrD-like helicase C-terminal domain; it reads MEQPRFHSPA…QFANIPPSLD (307 aa). Residues C805, C1129, C1132, and C1138 each contribute to the [4Fe-4S] cluster site.

This sequence belongs to the helicase family. AddB/RexB type 1 subfamily. As to quaternary structure, heterodimer of AddA and AddB. Mg(2+) serves as cofactor. [4Fe-4S] cluster is required as a cofactor.

In terms of biological role, the heterodimer acts as both an ATP-dependent DNA helicase and an ATP-dependent, dual-direction single-stranded exonuclease. Recognizes the chi site generating a DNA molecule suitable for the initiation of homologous recombination. The AddB subunit has 5' -&gt; 3' nuclease activity but not helicase activity. This Bacillus anthracis protein is ATP-dependent helicase/deoxyribonuclease subunit B.